A 247-amino-acid chain; its full sequence is Sugar fermentation stimulation protein homolog (247 aa).

Belongs to the SfsA family.

This is Sugar fermentation stimulation protein homolog from Methylorubrum populi (strain ATCC BAA-705 / NCIMB 13946 / BJ001) (Methylobacterium populi).